The sequence spans 191 residues: MSGDNPVGRLVVLAGPSAVGKSTVVHRLREEIEDLYFSVSMTTRAPRPGERDGVDYFFVSPEEFQSKIDAGEMLEWADIHGGLQRSGTPAGPVEAALLAGRPVLVEVDLVGARNVASLKPESETVFLAPPSWEVLVERLTGRGTEPEDVITRRLETAKNELTAQHEFKHVVVNEDVEKAVSDIKEILVGRR.

A Guanylate kinase-like domain is found at 8–188 (GRLVVLAGPS…AVSDIKEILV (181 aa)). An ATP-binding site is contributed by 15 to 22 (GPSAVGKS).

The protein belongs to the guanylate kinase family.

It is found in the cytoplasm. It catalyses the reaction GMP + ATP = GDP + ADP. In terms of biological role, essential for recycling GMP and indirectly, cGMP. This Corynebacterium diphtheriae (strain ATCC 700971 / NCTC 13129 / Biotype gravis) protein is Guanylate kinase.